Here is a 364-residue protein sequence, read N- to C-terminus: Anionic peroxidase (364 aa).

A signal peptide spans 1–20; sequence MASFMKQLSLVLSFIALALA. The propeptide occupies 21-66; it reads GCAVYQNTQTAMKDQLKVTPTWLDNTLKSTNLLSLGLGKPSGGKLG. The active-site Proton acceptor is the H99. Positions 100, 103, 105, and 107 each coordinate Ca(2+). A disulfide bridge links C101 with C106. N-linked (GlcNAc...) asparagine glycans are attached at residues N113, N188, N202, and N216. 2 disulfides stabilise this stretch: C155-C343 and C234-C255. Position 227 (H227) interacts with heme b. Position 228 (T228) interacts with Ca(2+). Residues N254 and N260 are each glycosylated (N-linked (GlcNAc...) asparagine). Residues D268, T270, and D275 each coordinate Ca(2+). N299 carries an N-linked (GlcNAc...) asparagine glycan.

It belongs to the peroxidase family. Classical plant (class III) peroxidase subfamily. Requires Ca(2+) as cofactor. Heme b serves as cofactor. Highly expressed in suspension cultured cells and calli. Weak expression also found in the stems of intact plants. No expression in leaf, tuberous root and non-tuberous root.

It is found in the secreted. It catalyses the reaction 2 a phenolic donor + H2O2 = 2 a phenolic radical donor + 2 H2O. In terms of biological role, removal of H(2)O(2), oxidation of toxic reductants, biosynthesis and degradation of lignin, suberization, auxin catabolism, response to environmental stresses such as wounding, pathogen attack and oxidative stress. These functions might be dependent on each isozyme/isoform in each plant tissue. May contribute to protection against cold-induced oxidative stress. The chain is Anionic peroxidase from Ipomoea batatas (Sweet potato).